The primary structure comprises 347 residues: Endo-1,4-beta-xylanase 3 (347 aa).

The signal sequence occupies residues 1–16 (MKANVILCLLAPLVAA). Positions 17-45 (LPTETIHLDPELAALRANLTERTADLWDR) are excised as a propeptide. At Q46 the chain carries Pyrrolidone carboxylic acid. The region spanning 46–345 (QASQSIDQLI…KPAYNSIVGI (300 aa)) is the GH10 domain. The active-site Proton donor is E176. E282 acts as the Nucleophile in catalysis. An intrachain disulfide couples C300 to C306.

It belongs to the glycosyl hydrolase 10 (cellulase F) family. As to quaternary structure, monomer. Post-translationally, not glycosylated.

The protein localises to the secreted. It carries out the reaction Endohydrolysis of (1-&gt;4)-beta-D-xylosidic linkages in xylans.. Its pathway is glycan degradation; xylan degradation. Glycoside hydrolase involved in the hydrolysis of xylan, a major plant cell wall hemicellulose made up of 1,4-beta-linked D-xylopyranose residues. Catalyzes the endohydrolysis of the main-chain 1,4-beta-glycosidic bonds connecting the xylose subunits yielding various xylooligosaccharides and xylose. Produces xylobiose and xylotriose as the main degradation products. This Hypocrea jecorina (strain QM6a) (Trichoderma reesei) protein is Endo-1,4-beta-xylanase 3 (xyn3).